A 127-amino-acid chain; its full sequence is uncharacterized protein (127 aa).

A signal peptide spans 1–16 (MIKKIIFGIAILLSLS). The N-palmitoyl cysteine moiety is linked to residue cysteine 17. A lipid anchor (S-diacylglycerol cysteine) is attached at cysteine 17. Positions 56–101 (EVRKEIQEYRVEIVDINKKKRELYNSLSKEAQNFLAEQQKYKQKLS) form a coiled coil. A disordered region spans residues 101–127 (SISKLPTEDDSPNNTANSKDNKDTDTK).

Its subcellular location is the cell membrane. This is an uncharacterized protein from Rickettsia felis (strain ATCC VR-1525 / URRWXCal2) (Rickettsia azadi).